Reading from the N-terminus, the 151-residue chain is 3-dehydroquinate dehydratase (151 aa).

Residue tyrosine 24 is the Proton acceptor of the active site. The substrate site is built by asparagine 76, histidine 82, and aspartate 89. Histidine 102 (proton donor) is an active-site residue. Residues 103-104 (LS) and arginine 113 contribute to the substrate site.

This sequence belongs to the type-II 3-dehydroquinase family. As to quaternary structure, homododecamer.

The enzyme catalyses 3-dehydroquinate = 3-dehydroshikimate + H2O. It functions in the pathway metabolic intermediate biosynthesis; chorismate biosynthesis; chorismate from D-erythrose 4-phosphate and phosphoenolpyruvate: step 3/7. In terms of biological role, catalyzes a trans-dehydration via an enolate intermediate. The chain is 3-dehydroquinate dehydratase from Acinetobacter baumannii (strain ATCC 17978 / DSM 105126 / CIP 53.77 / LMG 1025 / NCDC KC755 / 5377).